The primary structure comprises 214 residues: uncharacterized protein (214 aa).

Positions 1-194 (MVSANREMAV…MHYSEYLSYV (194 aa)) constitute an AMMECR1 domain.

This is an uncharacterized protein from Arabidopsis thaliana (Mouse-ear cress).